A 325-amino-acid chain; its full sequence is Pseudouridylate synthase TRUB2, mitochondrial (325 aa).

The active-site Nucleophile is the Asp101. Residues 292 to 325 form a disordered region; that stretch reads QTEGVSRGNPDREAAEGPIPGPSRGAEGEGELRA.

Belongs to the pseudouridine synthase TruB family.

It localises to the mitochondrion matrix. It catalyses the reaction a uridine in mRNA = a pseudouridine in mRNA. It carries out the reaction uridine(55) in tRNA = pseudouridine(55) in tRNA. In terms of biological role, minor enzyme contributing to the isomerization of uridine to pseudouridine (pseudouridylation) of specific mitochondrial mRNAs (mt-mRNAs) such as COXI and COXIII mt-mRNAs, modulating the efficiency of mitochondrial protein synthesis without changes in transcript abundance or stability. Also catalyzes pseudouridylation of some tRNAs, including synthesis of pseudouridine(55) from uracil-55, in the psi GC loop of a subset of tRNAs. The chain is Pseudouridylate synthase TRUB2, mitochondrial from Xenopus tropicalis (Western clawed frog).